We begin with the raw amino-acid sequence, 240 residues long: Orotidine 5'-phosphate decarboxylase (240 aa).

Residues aspartate 15, lysine 37, 64-73 (DLKYHDIPNT), threonine 125, arginine 186, glutamine 195, glycine 215, and arginine 216 each bind substrate. Residue lysine 66 is the Proton donor of the active site.

The protein belongs to the OMP decarboxylase family. Type 1 subfamily. As to quaternary structure, homodimer.

The catalysed reaction is orotidine 5'-phosphate + H(+) = UMP + CO2. Its pathway is pyrimidine metabolism; UMP biosynthesis via de novo pathway; UMP from orotate: step 2/2. Its function is as follows. Catalyzes the decarboxylation of orotidine 5'-monophosphate (OMP) to uridine 5'-monophosphate (UMP). This is Orotidine 5'-phosphate decarboxylase from Pelobacter propionicus (strain DSM 2379 / NBRC 103807 / OttBd1).